The primary structure comprises 332 residues: Tetraacyldisaccharide 4'-kinase (332 aa).

52-59 (TLGGAGKT) is an ATP binding site.

It belongs to the LpxK family.

The enzyme catalyses a lipid A disaccharide + ATP = a lipid IVA + ADP + H(+). It functions in the pathway glycolipid biosynthesis; lipid IV(A) biosynthesis; lipid IV(A) from (3R)-3-hydroxytetradecanoyl-[acyl-carrier-protein] and UDP-N-acetyl-alpha-D-glucosamine: step 6/6. Functionally, transfers the gamma-phosphate of ATP to the 4'-position of a tetraacyldisaccharide 1-phosphate intermediate (termed DS-1-P) to form tetraacyldisaccharide 1,4'-bis-phosphate (lipid IVA). This Methylobacterium sp. (strain 4-46) protein is Tetraacyldisaccharide 4'-kinase.